We begin with the raw amino-acid sequence, 551 residues long: Formate--tetrahydrofolate ligase (551 aa).

54 to 61 (TPPGEGKT) lines the ATP pocket.

The protein belongs to the formate--tetrahydrofolate ligase family.

The catalysed reaction is (6S)-5,6,7,8-tetrahydrofolate + formate + ATP = (6R)-10-formyltetrahydrofolate + ADP + phosphate. The protein operates within one-carbon metabolism; tetrahydrofolate interconversion. This Myxococcus xanthus (strain DK1622) protein is Formate--tetrahydrofolate ligase.